Here is a 92-residue protein sequence, read N- to C-terminus: MARSLKKNPFVAFHLLEKVEKLNIRKEKEIIVTWSRASTIIPTMVGHTIAVHNGKEHLPVFITDRMVGHKLGEFAPTLTFRGHARNDNRSRR.

Belongs to the universal ribosomal protein uS19 family.

Its subcellular location is the plastid. The protein resides in the chloroplast. Protein S19 forms a complex with S13 that binds strongly to the 16S ribosomal RNA. This Ceratophyllum demersum (Rigid hornwort) protein is Small ribosomal subunit protein uS19c.